A 716-amino-acid polypeptide reads, in one-letter code: Photosystem I P700 chlorophyll a apoprotein A1 (716 aa).

8 helical membrane passes run 57–80 (VFSA…FHGA), 143–166 (LYCT…FHYH), 182–206 (LNHH…HVSL), 278–296 (TVHH…GHMY), 333–356 (WHAQ…HHMY), 372–398 (LSLF…IFMV), 420–442 (AIIS…LYIH), and 518–536 (FLVH…LILL). Positions 560 and 569 each coordinate [4Fe-4S] cluster. The next 2 helical transmembrane spans lie at 576–597 (HVFL…HFSW) and 651–673 (LSAY…MFLF). Residue His662 participates in chlorophyll a' binding. Residues Met670 and Tyr678 each coordinate chlorophyll a. Trp679 serves as a coordination point for phylloquinone. A helical membrane pass occupies residues 711 to 716 (AVGVAH).

The protein belongs to the PsaA/PsaB family. As to quaternary structure, the PsaA/B heterodimer binds the P700 chlorophyll special pair and subsequent electron acceptors. PSI consists of a core antenna complex that captures photons, and an electron transfer chain that converts photonic excitation into a charge separation. The eukaryotic PSI reaction center is composed of at least 11 subunits. Requires P700 is a chlorophyll a/chlorophyll a' dimer, A0 is one or more chlorophyll a, A1 is one or both phylloquinones and FX is a shared 4Fe-4S iron-sulfur center. as cofactor.

It is found in the plastid. Its subcellular location is the chloroplast thylakoid membrane. The enzyme catalyses reduced [plastocyanin] + hnu + oxidized [2Fe-2S]-[ferredoxin] = oxidized [plastocyanin] + reduced [2Fe-2S]-[ferredoxin]. In terms of biological role, psaA and PsaB bind P700, the primary electron donor of photosystem I (PSI), as well as the electron acceptors A0, A1 and FX. PSI is a plastocyanin-ferredoxin oxidoreductase, converting photonic excitation into a charge separation, which transfers an electron from the donor P700 chlorophyll pair to the spectroscopically characterized acceptors A0, A1, FX, FA and FB in turn. Oxidized P700 is reduced on the lumenal side of the thylakoid membrane by plastocyanin. The sequence is that of Photosystem I P700 chlorophyll a apoprotein A1 from Araucaria araucana (Monkey-puzzle tree).